A 401-amino-acid polypeptide reads, in one-letter code: Chalcone synthase 2 (401 aa).

Cysteine 168 is a catalytic residue.

Belongs to the thiolase-like superfamily. Chalcone/stilbene synthases family.

The catalysed reaction is (E)-4-coumaroyl-CoA + 3 malonyl-CoA + 3 H(+) = 2',4,4',6'-tetrahydroxychalcone + 3 CO2 + 4 CoA. It functions in the pathway secondary metabolite biosynthesis; flavonoid biosynthesis. In terms of biological role, the primary product of this enzyme is 4,2',4',6'-tetrahydroxychalcone (also termed naringenin-chalcone or chalcone) which can under specific conditions spontaneously isomerize into naringenin. The sequence is that of Chalcone synthase 2 (CHS2) from Sorghum bicolor (Sorghum).